The chain runs to 118 residues: Protein 5.3 (118 aa).

The protein is Protein 5.3 of Escherichia phage T7 (Bacteriophage T7).